A 947-amino-acid chain; its full sequence is Bifunctional glutamine synthetase adenylyltransferase/adenylyl-removing enzyme (947 aa).

Residues 1 to 443 are adenylyl removase; that stretch reads MQLPSSLVSV…VFETLIGDDE (443 aa). Residues 451–947 are adenylyl transferase; the sequence is ARHFHELWDM…VKQAWNQWFA (497 aa).

This sequence belongs to the GlnE family. The cofactor is Mg(2+).

The enzyme catalyses [glutamine synthetase]-O(4)-(5'-adenylyl)-L-tyrosine + phosphate = [glutamine synthetase]-L-tyrosine + ADP. It catalyses the reaction [glutamine synthetase]-L-tyrosine + ATP = [glutamine synthetase]-O(4)-(5'-adenylyl)-L-tyrosine + diphosphate. Functionally, involved in the regulation of glutamine synthetase GlnA, a key enzyme in the process to assimilate ammonia. When cellular nitrogen levels are high, the C-terminal adenylyl transferase (AT) inactivates GlnA by covalent transfer of an adenylyl group from ATP to specific tyrosine residue of GlnA, thus reducing its activity. Conversely, when nitrogen levels are low, the N-terminal adenylyl removase (AR) activates GlnA by removing the adenylyl group by phosphorolysis, increasing its activity. The regulatory region of GlnE binds the signal transduction protein PII (GlnB) which indicates the nitrogen status of the cell. The sequence is that of Bifunctional glutamine synthetase adenylyltransferase/adenylyl-removing enzyme from Vibrio parahaemolyticus serotype O3:K6 (strain RIMD 2210633).